The primary structure comprises 550 residues: Arginine--tRNA ligase (550 aa).

A 'HIGH' region motif is present at residues A130–G140.

Belongs to the class-I aminoacyl-tRNA synthetase family. Monomer.

It is found in the cytoplasm. The catalysed reaction is tRNA(Arg) + L-arginine + ATP = L-arginyl-tRNA(Arg) + AMP + diphosphate. The chain is Arginine--tRNA ligase (argS) from Mycolicibacterium smegmatis (strain ATCC 700084 / mc(2)155) (Mycobacterium smegmatis).